The following is a 366-amino-acid chain: Protein-glutamate methylesterase/protein-glutamine glutaminase 2 (366 aa).

The Response regulatory domain maps to 3 to 119 (RLLIADDSAL…SLELDRLRPL (117 aa)). Aspartate 53 bears the 4-aspartylphosphate mark. A disordered region spans residues 149 to 168 (AASSPRAKAARRGAARQRAK). Basic residues predominate over residues 156 to 166 (KAARRGAARQR). The CheB-type methylesterase domain occupies 171 to 363 (PAPGLVLIGT…AAVIEWGNAD (193 aa)). Residues serine 181, histidine 208, and aspartate 305 contribute to the active site.

The protein belongs to the CheB family. In terms of processing, phosphorylated by CheA. Phosphorylation of the N-terminal regulatory domain activates the methylesterase activity.

It localises to the cytoplasm. It catalyses the reaction [protein]-L-glutamate 5-O-methyl ester + H2O = L-glutamyl-[protein] + methanol + H(+). The enzyme catalyses L-glutaminyl-[protein] + H2O = L-glutamyl-[protein] + NH4(+). Involved in chemotaxis. Part of a chemotaxis signal transduction system that modulates chemotaxis in response to various stimuli. Catalyzes the demethylation of specific methylglutamate residues introduced into the chemoreceptors (methyl-accepting chemotaxis proteins or MCP) by CheR. Also mediates the irreversible deamidation of specific glutamine residues to glutamic acid. The polypeptide is Protein-glutamate methylesterase/protein-glutamine glutaminase 2 (Rhodopseudomonas palustris (strain BisB18)).